Reading from the N-terminus, the 365-residue chain is tRNA(Met) cytidine acetate ligase (365 aa).

Residues 7-20 (IAEFNPFHNGHKYL), Gly-96, Asn-152, and Arg-175 each bind ATP.

The protein belongs to the TmcAL family.

Its subcellular location is the cytoplasm. It catalyses the reaction cytidine(34) in elongator tRNA(Met) + acetate + ATP = N(4)-acetylcytidine(34) in elongator tRNA(Met) + AMP + diphosphate. Its function is as follows. Catalyzes the formation of N(4)-acetylcytidine (ac(4)C) at the wobble position of elongator tRNA(Met), using acetate and ATP as substrates. First activates an acetate ion to form acetyladenylate (Ac-AMP) and then transfers the acetyl group to tRNA to form ac(4)C34. In Streptococcus pneumoniae (strain 70585), this protein is tRNA(Met) cytidine acetate ligase.